A 119-amino-acid polypeptide reads, in one-letter code: Large ribosomal subunit protein uL22 (119 aa).

This sequence belongs to the universal ribosomal protein uL22 family. In terms of assembly, part of the 50S ribosomal subunit.

This protein binds specifically to 23S rRNA; its binding is stimulated by other ribosomal proteins, e.g. L4, L17, and L20. It is important during the early stages of 50S assembly. It makes multiple contacts with different domains of the 23S rRNA in the assembled 50S subunit and ribosome. Functionally, the globular domain of the protein is located near the polypeptide exit tunnel on the outside of the subunit, while an extended beta-hairpin is found that lines the wall of the exit tunnel in the center of the 70S ribosome. The protein is Large ribosomal subunit protein uL22 of Rickettsia canadensis (strain McKiel).